We begin with the raw amino-acid sequence, 555 residues long: uncharacterized protein (555 aa).

At 1–83 (MSNEDETTRL…GRRKLLCLYG (83 aa)) the chain is on the extracellular side. The chain crosses the membrane as a helical span at residues 84–104 (LVMIICIAESISMTATIPLVM). Residues 105 to 125 (DKVAEGISDENGHYDSVAVQT) lie on the Cytoplasmic side of the membrane. The chain crosses the membrane as a helical span at residues 126 to 146 (IVSSISSSTMMIAGAISIFMA). At 147 to 188 (GKWGELSDRIGRVRVFKYMSGIRVIGLLTHVFTLSSKMKYHK) the chain is on the extracellular side. The chain crosses the membrane as a helical span at residues 189 to 209 (WAIVLTACIVPSFGGLFALVA). Over 210–229 (NGNSYVSDIVKTEHRMVTIG) the chain is Cytoplasmic. A helical transmembrane segment spans residues 230 to 250 (IMMSCIYATMGVGPMFGSFLV). The Extracellular segment spans residues 251–257 (KWTHGNG). Residues 258–278 (FIPIYTSIAFVILALIICETI) traverse the membrane as a helical segment. The Cytoplasmic portion of the chain corresponds to 279–356 (MVEPRHETQM…LVPRHTVILL (78 aa)). The segment at 289–311 (AHSQSTYTKRREKLRSQSGSDDA) is disordered. A helical transmembrane segment spans residues 357 to 377 (IVLDILFVCGTTSCMPALILF). The Extracellular portion of the chain corresponds to 378 to 386 (STYEYKWHA). Residues 387–407 (VELGYFISILGIGRGVVLLVV) form a helical membrane-spanning segment. Over 408-428 (SPTLLYTLKRIYQHLNHSIDK) the chain is Cytoplasmic. The helical transmembrane segment at 429 to 449 (IDIFCIQFSMIVITLSLFVMI) threads the bilayer. At 450-459 (RFGEKTPTSM) the chain is on the extracellular side. Residues 460 to 480 (IIFALLQALSAFCSPTLQSGI) traverse the membrane as a helical segment. Over 481 to 491 (IKYTSKKHTGE) the chain is Cytoplasmic. Residues 492–512 (MFGAMALVRSCVMLVIPPILL) form a helical membrane-spanning segment. The Extracellular segment spans residues 513–523 (KLYGSTVSVNP). Residues 524–544 (SLFMYIPFSTSIVAILLTFFL) form a helical membrane-spanning segment. Residues 545-555 (RIYKNPPLDGP) are Cytoplasmic-facing.

The protein localises to the membrane. This is an uncharacterized protein from Saccharomyces cerevisiae (strain ATCC 204508 / S288c) (Baker's yeast).